Consider the following 352-residue polypeptide: NAD(P)H pyrophosphatase NUDT13, mitochondrial (352 aa).

A mitochondrion-targeting transit peptide spans 1 to 20 (MSLYCGIACRRKFFWCYRLL). Residues 196–323 (PQMAPVAITL…PYTQQQNGTF (128 aa)) enclose the Nudix hydrolase domain. Positions 216-240 (RQSSFPKGMYSALAGFCDIGESVEE) match the Nudix box motif.

It belongs to the Nudix hydrolase family. Mg(2+) is required as a cofactor. Requires Mn(2+) as cofactor. In terms of tissue distribution, highly expressed in metastasis-suppressed chromosome 6 melanoma hybrids.

It localises to the mitochondrion. It catalyses the reaction NADH + H2O = reduced beta-nicotinamide D-ribonucleotide + AMP + 2 H(+). The enzyme catalyses NAD(+) + H2O = beta-nicotinamide D-ribonucleotide + AMP + 2 H(+). It carries out the reaction NADPH + H2O = reduced beta-nicotinamide D-ribonucleotide + adenosine 2',5'-bisphosphate + 2 H(+). Functionally, NAD(P)H pyrophosphatase that hydrolyzes NADH into NMNH and AMP, and NADPH into NMNH and 2',5'-ADP. Has a marked preference for the reduced pyridine nucleotides. Does not show activity toward NAD-capped RNAs; the NAD-cap is an atypical cap present at the 5'-end of some RNAs. The sequence is that of NAD(P)H pyrophosphatase NUDT13, mitochondrial from Homo sapiens (Human).